The primary structure comprises 184 residues: MSTQNSAYSAFSSLLAEAALPVSPAELHGHLLGRVCAGAGFDEAAWQHAAAELLGGAPGERLEAALSGLLGMVRQDFSAGEVAVVLLLPDDETPLAQRTEALGQWCQGFLAGFGLTAREGSLTGEAEEVLQDMAAIAQVQGQLEDSEDGETDYMEVMEYLRVAPLLLFAECGKPLEPAPKPSLH.

Belongs to the UPF0149 family.

The sequence is that of UPF0149 protein PSPA7_5968 from Pseudomonas paraeruginosa (strain DSM 24068 / PA7) (Pseudomonas aeruginosa (strain PA7)).